A 253-amino-acid polypeptide reads, in one-letter code: 5-oxoprolinase subunit A (253 aa).

It belongs to the LamB/PxpA family. Forms a complex composed of PxpA, PxpB and PxpC.

The enzyme catalyses 5-oxo-L-proline + ATP + 2 H2O = L-glutamate + ADP + phosphate + H(+). Its function is as follows. Catalyzes the cleavage of 5-oxoproline to form L-glutamate coupled to the hydrolysis of ATP to ADP and inorganic phosphate. The protein is 5-oxoprolinase subunit A of Azorhizobium caulinodans (strain ATCC 43989 / DSM 5975 / JCM 20966 / LMG 6465 / NBRC 14845 / NCIMB 13405 / ORS 571).